The following is a 139-amino-acid chain: Desampylase (139 aa).

An MPN domain is found at Leu6–Glu139. Glu31 acts as the Proton donor/acceptor in catalysis. Residues His88, His90, and Asp101 each coordinate Zn(2+). Residues His88–Asp101 carry the JAMM motif motif.

This sequence belongs to the peptidase M67B family. As to quaternary structure, monomer. The cofactor is Zn(2+).

The catalysed reaction is an N(6)-[small archaeal modifier protein]-[protein]-L-lysine + H2O = a [protein]-L-lysine + a [small archaeal modifier protein].. Inhibited by EDTA and N-ethylmaleimide (NEM) in vitro. Its function is as follows. Metalloprotease that displays desampylase (DSAMP) activity, cleaving ubiquitin-like small archaeal modifier proteins (SAMP1, SAMP2 and SAMP3) from protein conjugates (isopeptide- and linear-linked). Thus, likely regulates sampylation and the pools of 'free' SAMP available for protein modification. Functions as a specific and not a general protease since it is unable to hydrolyze a variety of unmodified proteins otherwise hydrolyzed by proteinase K. This is Desampylase from Haloferax volcanii (strain ATCC 29605 / DSM 3757 / JCM 8879 / NBRC 14742 / NCIMB 2012 / VKM B-1768 / DS2) (Halobacterium volcanii).